Here is a 266-residue protein sequence, read N- to C-terminus: CAAX prenyl protease 2 (266 aa).

The next 3 helical transmembrane spans lie at 1–21, 42–59, and 78–98; these read MGAG…VHLF, LLSN…LRDY, and ITYP…MMQI. Catalysis depends on proton donor/acceptor residues E131 and H164. 3 consecutive transmembrane segments (helical) span residues 186-206, 210-230, and 239-259; these read GFQF…QLTT, IVPI…WLEI, and RLTL…LLYT.

The protein belongs to the peptidase U48 family.

It is found in the endoplasmic reticulum membrane. The protein localises to the membrane. The enzyme catalyses Hydrolyzes the peptide bond -P2-(S-farnesyl or geranylgeranyl)C-P1'-P2'-P3'-COOH where P1' and P2' are amino acids with aliphatic sidechains and P3' is any C-terminal residue.. Its function is as follows. Protease involved in the processing of a variety of prenylated proteins containing the C-terminal CAAX motif, where C is a cysteine modified with an isoprenoid lipid, A is an aliphatic amino acid and X is any C-terminal amino acid. Proteolytically removes the C-terminal three residues of farnesylated and geranylated proteins, leaving the prenylated cysteine as the new C-terminus. This chain is CAAX prenyl protease 2, found in Caenorhabditis elegans.